The following is a 335-amino-acid chain: Nucleoid-associated protein KPK_1538 (335 aa).

Belongs to the YejK family.

The protein resides in the cytoplasm. It localises to the nucleoid. This is Nucleoid-associated protein KPK_1538 from Klebsiella pneumoniae (strain 342).